The primary structure comprises 255 residues: Acetylglutamate kinase (255 aa).

Residues 40–41, R62, and N153 contribute to the substrate site; that span reads GG.

The protein belongs to the acetylglutamate kinase family. ArgB subfamily.

It localises to the cytoplasm. The enzyme catalyses N-acetyl-L-glutamate + ATP = N-acetyl-L-glutamyl 5-phosphate + ADP. It functions in the pathway amino-acid biosynthesis; L-arginine biosynthesis; N(2)-acetyl-L-ornithine from L-glutamate: step 2/4. Catalyzes the ATP-dependent phosphorylation of N-acetyl-L-glutamate. This is Acetylglutamate kinase from Bacillus cereus (strain AH820).